Reading from the N-terminus, the 88-residue chain is Large ribosomal subunit protein bL27 (88 aa).

The tract at residues 1–24 (MAHKKGTGSTRNGRDSNSKRLGVK) is disordered.

Belongs to the bacterial ribosomal protein bL27 family.

The sequence is that of Large ribosomal subunit protein bL27 from Prochlorococcus marinus (strain MIT 9313).